Reading from the N-terminus, the 201-residue chain is Eukaryotic translation initiation factor 4E-5 (201 aa).

Residues Cys122 and Cys126 are joined by a disulfide bond.

This sequence belongs to the eukaryotic initiation factor 4E family. As to quaternary structure, eIF4F is a multi-subunit complex, the composition of which varies with external and internal environmental conditions. It is composed of at least eIF4A, eIF4E and eIF4G. eIF4E is also known to interact with other partners. As to expression, enriched in the germline.

Its function is as follows. Recognizes and binds the 7-methylguanosine-containing mRNA cap during an early step in the initiation of protein synthesis and facilitates ribosome binding by inducing the unwinding of the mRNAs secondary structures. All 5 eIF4E proteins bind monomethyl cap structures. Only ife-1, ife-2 and ife-5 bind trimethyl cap structures which result from trans-splicing. Translation of trimethyl cap structure mRNAs may be regulated by intracellular redox state; disulfide bonds change the width and depth of the cap-binding cavity determining selectivity to mRNA caps. This Caenorhabditis elegans protein is Eukaryotic translation initiation factor 4E-5 (ife-5).